The chain runs to 255 residues: Hydroxyacylglutathione hydrolase (255 aa).

Zn(2+)-binding residues include H56, H58, D60, H61, H114, D133, and H171.

The protein belongs to the metallo-beta-lactamase superfamily. Glyoxalase II family. Monomer. Zn(2+) is required as a cofactor.

The catalysed reaction is an S-(2-hydroxyacyl)glutathione + H2O = a 2-hydroxy carboxylate + glutathione + H(+). The protein operates within secondary metabolite metabolism; methylglyoxal degradation; (R)-lactate from methylglyoxal: step 2/2. Functionally, thiolesterase that catalyzes the hydrolysis of S-D-lactoyl-glutathione to form glutathione and D-lactic acid. This Ruegeria pomeroyi (strain ATCC 700808 / DSM 15171 / DSS-3) (Silicibacter pomeroyi) protein is Hydroxyacylglutathione hydrolase.